The primary structure comprises 142 residues: Small heat shock protein IbpB (142 aa).

One can recognise a sHSP domain in the interval 26 to 137; sequence AGESQSFPPY…APQRIAISER (112 aa).

It belongs to the small heat shock protein (HSP20) family. Homodimer. Forms homomultimers of about 100-150 subunits at optimal growth temperatures. Conformation changes to oligomers at high temperatures or high ionic concentrations. The decrease in size of the multimers is accompanied by an increase in chaperone activity.

It is found in the cytoplasm. In terms of biological role, associates with aggregated proteins, together with IbpA, to stabilize and protect them from irreversible denaturation and extensive proteolysis during heat shock and oxidative stress. Aggregated proteins bound to the IbpAB complex are more efficiently refolded and reactivated by the ATP-dependent chaperone systems ClpB and DnaK/DnaJ/GrpE. Its activity is ATP-independent. The sequence is that of Small heat shock protein IbpB from Klebsiella pneumoniae (strain 342).